A 328-amino-acid chain; its full sequence is Sulfate adenylyltransferase subunit 2 (328 aa).

A disordered region spans residues 309–328 (RAIDKDQTASMEKKKQEGYF).

It belongs to the PAPS reductase family. CysD subfamily. In terms of assembly, heterodimer composed of CysD, the smaller subunit, and CysN.

It catalyses the reaction sulfate + ATP + H(+) = adenosine 5'-phosphosulfate + diphosphate. It participates in sulfur metabolism; hydrogen sulfide biosynthesis; sulfite from sulfate: step 1/3. Its function is as follows. With CysN forms the ATP sulfurylase (ATPS) that catalyzes the adenylation of sulfate producing adenosine 5'-phosphosulfate (APS) and diphosphate, the first enzymatic step in sulfur assimilation pathway. APS synthesis involves the formation of a high-energy phosphoric-sulfuric acid anhydride bond driven by GTP hydrolysis by CysN coupled to ATP hydrolysis by CysD. This chain is Sulfate adenylyltransferase subunit 2, found in Hyphomonas neptunium (strain ATCC 15444).